The sequence spans 138 residues: Flavodoxin (138 aa).

Positions 1 to 136 constitute a Flavodoxin-like domain; that stretch reads MKIVYWSGTG…DCIEFGKKIA (136 aa).

This sequence belongs to the flavodoxin family. Requires FMN as cofactor.

Functionally, low-potential electron donor to a number of redox enzymes. The chain is Flavodoxin from Clostridium beijerinckii (Clostridium MP).